Here is a 338-residue protein sequence, read N- to C-terminus: Large ribosomal subunit protein uL3 (338 aa).

Disordered stretches follow at residues Met1–Gly44, Ala151–Gly170, Val206–Gly259, and Phe312–Gly338. Residues Ser22–Pro31 are compositionally biased toward polar residues. Residues Gly220 to Ile237 show a composition bias toward basic residues. The span at Arg247–Gly259 shows a compositional bias: polar residues.

It belongs to the universal ribosomal protein uL3 family. In terms of assembly, part of the 50S ribosomal subunit. Forms a cluster with proteins L14 and L24e. Interacts weakly with protein L13.

Functionally, one of the primary rRNA binding proteins, it binds directly near the 3'-end of the 23S rRNA, where it nucleates assembly of the 50S subunit. This chain is Large ribosomal subunit protein uL3 (rpl3), found in Haloarcula marismortui (strain ATCC 43049 / DSM 3752 / JCM 8966 / VKM B-1809) (Halobacterium marismortui).